Here is a 347-residue protein sequence, read N- to C-terminus: Secretory carrier-associated membrane protein 3 (347 aa).

Positions 1 to 88 (MAQSRDGGNP…EPKNYGSYST (88 aa)) are disordered. Residues 1–170 (MAQSRDGGNP…QKTVSTMYYL (170 aa)) are Cytoplasmic-facing. At S32 the chain carries Phosphoserine. Residue T37 is modified to Phosphothreonine. 2 positions are modified to phosphotyrosine: Y41 and Y53. Residues 49 to 66 (PPPAYEPPAPAPLPPPSA) show a composition bias toward pro residues. A phosphoserine mark is found at S72 and S76. Y83 is subject to Phosphotyrosine. S85 is subject to Phosphoserine. The next 4 helical transmembrane spans lie at 171–191 (WMCSTLALLLNFLACLASFCV), 197–217 (AGFGLSILWVLLFTPCSFVCW), 247–267 (FVLQAIGIPGWGFSGWISALV), and 277–297 (VLMLLVALLFTGIAVLGIVML). Residues 298–347 (KRIHSLYRRTGASFQKAQQEFAAGVFSNPAVRTAAANAAAGAAENAFRAP) lie on the Cytoplasmic side of the membrane. K313 participates in a covalent cross-link: Glycyl lysine isopeptide (Lys-Gly) (interchain with G-Cter in SUMO1).

This sequence belongs to the SCAMP family. Interacts with NEDD4, NEDD4L and TSG101. Interacts with RNF126. Post-translationally, monoubiquitinated. As to expression, widely expressed, with highest expression in heart and skeletal muscle.

It localises to the membrane. Its function is as follows. Functions in post-Golgi recycling pathways. Acts as a recycling carrier to the cell surface. This Homo sapiens (Human) protein is Secretory carrier-associated membrane protein 3 (SCAMP3).